Consider the following 513-residue polypeptide: MQLNSTEISELIKQRIAQFSVVSEAHNEGTIVSVSDGVIRIHGLADCMQGEMISLPGNRYAIALNLERDSVGAVVMGPYADLAEGMKVKCTGRILEVPVGRGLLGRVVNTLGAPIDGKGPVDNDGFSPIEVIAPGVIERQSVDQPVQTGYKSVDAMIPIGRGQRELIIGDRQTGKTAMAIDAIINQRDSGIKCVYVAIGQKASTISNVVRKLEEHGALSNTIVVVATASESAALQYLAPYAGCAMGEYFRDRGEDALIVYDDLSKQAVAYRQVSLLLRRPPGREAFPGDVFYLHSRLLERASRVNAEYVENFTKGEVKGKTGSLTALPIIETQAGDVSAFVPTNVISITDGQIFLETNLFNSGIRPAVNPGISVSRVGGAAQTKIIKKLSGGIRTALAQYRELAAFSQFASDLDEATRKQLSHGQKVTELLKQKQYAPMSVAQQGLVLFAAERGYLEDVELAKIGSFEAALLAYVDRDHAPLMQEINQSGGYNDEIEGKLKSILDSFKATQSW.

169–176 is a binding site for ATP; sequence GDRQTGKT.

This sequence belongs to the ATPase alpha/beta chains family. F-type ATPases have 2 components, CF(1) - the catalytic core - and CF(0) - the membrane proton channel. CF(1) has five subunits: alpha(3), beta(3), gamma(1), delta(1), epsilon(1). CF(0) has three main subunits: a(1), b(2) and c(9-12). The alpha and beta chains form an alternating ring which encloses part of the gamma chain. CF(1) is attached to CF(0) by a central stalk formed by the gamma and epsilon chains, while a peripheral stalk is formed by the delta and b chains.

The protein localises to the cell inner membrane. It catalyses the reaction ATP + H2O + 4 H(+)(in) = ADP + phosphate + 5 H(+)(out). Produces ATP from ADP in the presence of a proton gradient across the membrane. The alpha chain is a regulatory subunit. The chain is ATP synthase subunit alpha from Enterobacter sp. (strain 638).